Consider the following 21-residue polypeptide: 5-methyltetrahydropteroyltriglutamate--homocysteine methyltransferase (21 aa).

Belongs to the vitamin-B12 independent methionine synthase family. Zn(2+) is required as a cofactor.

The protein localises to the cytoplasm. The catalysed reaction is 5-methyltetrahydropteroyltri-L-glutamate + L-homocysteine = tetrahydropteroyltri-L-glutamate + L-methionine. It participates in amino-acid biosynthesis; L-methionine biosynthesis via de novo pathway; L-methionine from L-homocysteine (MetE route): step 1/1. Catalyzes the transfer of a methyl group from 5-methyltetrahydrofolate to homocysteine resulting in methionine formation. The polypeptide is 5-methyltetrahydropteroyltriglutamate--homocysteine methyltransferase (Populus euphratica (Euphrates poplar)).